Consider the following 702-residue polypeptide: Ribosomal RNA large subunit methyltransferase K/L (702 aa).

A THUMP domain is found at Leu-43 to Leu-154.

This sequence belongs to the methyltransferase superfamily. RlmKL family.

It is found in the cytoplasm. The catalysed reaction is guanosine(2445) in 23S rRNA + S-adenosyl-L-methionine = N(2)-methylguanosine(2445) in 23S rRNA + S-adenosyl-L-homocysteine + H(+). It carries out the reaction guanosine(2069) in 23S rRNA + S-adenosyl-L-methionine = N(2)-methylguanosine(2069) in 23S rRNA + S-adenosyl-L-homocysteine + H(+). Specifically methylates the guanine in position 2445 (m2G2445) and the guanine in position 2069 (m7G2069) of 23S rRNA. The polypeptide is Ribosomal RNA large subunit methyltransferase K/L (Escherichia coli O6:K15:H31 (strain 536 / UPEC)).